A 65-amino-acid polypeptide reads, in one-letter code: Toxin CsEM1 (65 aa).

Residues 1–65 form the LCN-type CS-alpha/beta domain; sequence KEGYLVNSYT…VWPLPNKTCN (65 aa). Cystine bridges form between Cys12–Cys64, Cys16–Cys40, Cys25–Cys45, and Cys29–Cys47.

It belongs to the long (4 C-C) scorpion toxin superfamily. Sodium channel inhibitor family. Beta subfamily. Expressed by the venom gland.

Its subcellular location is the secreted. Functionally, beta toxins bind voltage-independently at site-4 of sodium channels (Nav) and shift the voltage of activation toward more negative potentials thereby affecting sodium channel activation and promoting spontaneous and repetitive firing. Highly potent. In Centruroides sculpturatus (Arizona bark scorpion), this protein is Toxin CsEM1.